A 414-amino-acid polypeptide reads, in one-letter code: tRNA(Ile)-lysidine synthase (414 aa).

An ATP-binding site is contributed by 13-18 (SGGIDS).

Belongs to the tRNA(Ile)-lysidine synthase family.

The protein resides in the cytoplasm. The catalysed reaction is cytidine(34) in tRNA(Ile2) + L-lysine + ATP = lysidine(34) in tRNA(Ile2) + AMP + diphosphate + H(+). Ligates lysine onto the cytidine present at position 34 of the AUA codon-specific tRNA(Ile) that contains the anticodon CAU, in an ATP-dependent manner. Cytidine is converted to lysidine, thus changing the amino acid specificity of the tRNA from methionine to isoleucine. The protein is tRNA(Ile)-lysidine synthase of Thermotoga sp. (strain RQ2).